A 226-amino-acid chain; its full sequence is EEF1A lysine methyltransferase 3 (226 aa).

Residues tryptophan 57, 83 to 85 (GAG), aspartate 104, tryptophan 133, and alanine 150 each bind S-adenosyl-L-methionine.

Belongs to the methyltransferase superfamily. METTL21 family. In terms of assembly, interacts with members of the heat shock protein 70 and 90 families and of the TCP-1 chaperonin family, as well as with HSPD1, STIP1 and tubulin; at least some of these proteins may be methylation substrates.

The protein localises to the cytoplasm. It is found in the cytoskeleton. It localises to the microtubule organizing center. The protein resides in the centrosome. The enzyme catalyses L-lysyl-[protein] + 3 S-adenosyl-L-methionine = N(6),N(6),N(6)-trimethyl-L-lysyl-[protein] + 3 S-adenosyl-L-homocysteine + 3 H(+). The catalysed reaction is L-lysyl-[protein] + S-adenosyl-L-methionine = N(6)-methyl-L-lysyl-[protein] + S-adenosyl-L-homocysteine + H(+). It catalyses the reaction N(6)-methyl-L-lysyl-[protein] + S-adenosyl-L-methionine = N(6),N(6)-dimethyl-L-lysyl-[protein] + S-adenosyl-L-homocysteine + H(+). It carries out the reaction N(6),N(6)-dimethyl-L-lysyl-[protein] + S-adenosyl-L-methionine = N(6),N(6),N(6)-trimethyl-L-lysyl-[protein] + S-adenosyl-L-homocysteine + H(+). In terms of biological role, protein-lysine methyltransferase that selectively mono-, di- and trimethylates 'Lys-165' of the translation elongation factors EEF1A1 and EEF1A2 in an aminoacyl-tRNA and GTP-dependent manner. EEF1A1 methylation by EEF1AKMT3 is dynamic as well as inducible by stress conditions, such as ER-stress, and plays a regulatory role on mRNA translation. This is EEF1A lysine methyltransferase 3 from Bos taurus (Bovine).